Reading from the N-terminus, the 62-residue chain is Venom peptide SjAPI-2 (62 aa).

Intrachain disulfides connect Cys-4/Cys-40, Cys-14/Cys-36, Cys-18/Cys-32, Cys-22/Cys-60, and Cys-42/Cys-54. A TIL domain is found at 4-60 (CRISGEVFTWCGTTCPLTCENFRNPPKHCPQGCFVGCMCRRGLVRHRNGRCVRPPRC).

It belongs to the serine protease inhibitor-like (TIL domain-containing) family. As to expression, expressed by the venom gland.

It is found in the secreted. Its function is as follows. Serine protease inhibitor. In Scorpiops jendeki (Scorpion), this protein is Venom peptide SjAPI-2.